Consider the following 83-residue polypeptide: Putative defensin-like protein 67 (83 aa).

Positions 1-24 are cleaved as a signal peptide; sequence MGSSKLMVTCIVVAMLTISCDILS. Disulfide bonds link Cys-38/Cys-82, Cys-42/Cys-65, Cys-51/Cys-80, and Cys-55/Cys-81.

The protein belongs to the DEFL family.

Its subcellular location is the secreted. This chain is Putative defensin-like protein 67, found in Arabidopsis thaliana (Mouse-ear cress).